A 445-amino-acid polypeptide reads, in one-letter code: MAAFSLSAKQILSPSTHRPSLSKTTTADSSLRFRNPHSLSLRCSSLSSSSNVGRTRLMRASASSTAPVMDTSPTKAVSSAPTIVDVDLGDRSYPIYIGSGLLDQPDLLQRHVHGKRVLVVTNSTVAPIYLDKVVGALTNGNPNVSVESVILPDGEKYKNMDTLMKVFDKAIESRLDRRCTFVALGGGVIGDMCGYAAASFLRGVNFIQIPTTVMAQVDSSVGGKTGINHRLGKNLIGAFYQPQCVLIDTDTLNTLPDRELASGLAEVVKYGLIRDANFFEWQEKNMPALMARDPSALAYAIKRSCENKAEVVSLDEKESGLRATLNLGHTFGHAIETGFGYGQWLHGEAVAAGMVMAVDMSYRLGWIDESIVNRAHNILQQAKLPTAPPETMTVEMFKSVMAVDKKVADGLLRLILLKGPLGNCVFTGDYDRKALDETLHAFCKS.

The transit peptide at 1-68 (MAAFSLSAKQ…RASASSTAPV (68 aa)) directs the protein to the chloroplast. NAD(+) contacts are provided by residues Asn-122, 153–155 (DGE), Lys-158, 186–191 (GGVIGD), 211–212 (TT), Lys-224, Lys-233, and 251–254 (TLNT). Glu-266 is an a divalent metal cation binding site. Lys-308 is an NAD(+) binding site. Positions 329 and 346 each coordinate a divalent metal cation.

The protein belongs to the sugar phosphate cyclases superfamily. Dehydroquinate synthase family. In terms of assembly, homodimer. A divalent metal cation serves as cofactor. NAD(+) is required as a cofactor.

Its subcellular location is the plastid. The protein resides in the chloroplast. The catalysed reaction is 7-phospho-2-dehydro-3-deoxy-D-arabino-heptonate = 3-dehydroquinate + phosphate. The protein operates within metabolic intermediate biosynthesis; chorismate biosynthesis; chorismate from D-erythrose 4-phosphate and phosphoenolpyruvate: step 2/7. Its function is as follows. Catalyzes the second step in the shikimate pathway. The protein is 3-dehydroquinate synthase, chloroplastic (DHQS) of Actinidia chinensis var. chinensis (Chinese soft-hair kiwi).